Reading from the N-terminus, the 123-residue chain is Large ribosomal subunit protein uL24 (123 aa).

The segment at Arg100 to Ile123 is disordered.

The protein belongs to the universal ribosomal protein uL24 family. As to quaternary structure, part of the 50S ribosomal subunit.

Its function is as follows. One of two assembly initiator proteins, it binds directly to the 5'-end of the 23S rRNA, where it nucleates assembly of the 50S subunit. In terms of biological role, one of the proteins that surrounds the polypeptide exit tunnel on the outside of the subunit. The protein is Large ribosomal subunit protein uL24 of Nocardioides sp. (strain ATCC BAA-499 / JS614).